Here is a 586-residue protein sequence, read N- to C-terminus: Ezrin (586 aa).

Positions 2–296 constitute an FERM domain; that stretch reads PKPINVRVTT…NHELYMRRRK (295 aa). Residue lysine 60 is modified to N6-acetyllysine. Positions 115–120 match the [IL]-x-C-x-x-[DE] motif motif; that stretch reads IYCPPE. Tyrosine 146 bears the Phosphotyrosine; by PDGFR mark. Residues 244 to 586 form an interaction with SCYL3 region; it reads EIRNISFNDK…KQRIDEFEAL (343 aa). Residues 302–462 adopt a coiled-coil conformation; it reads VQQMKAQARE…QDDLVKTKEE (161 aa). Residues 306 to 341 are disordered; the sequence is KAQAREEKHQKQLERQQLETEKKRRETVEREKEQMM. Over residues 308–341 the composition is skewed to basic and acidic residues; that stretch reads QAREEKHQKQLERQQLETEKKRRETVEREKEQMM. Residue tyrosine 354 is modified to Phosphotyrosine; by PDGFR. The residue at position 366 (serine 366) is a Phosphoserine. Tyrosine 478 carries the phosphotyrosine modification. The disordered stretch occupies residues 485 to 564; it reads VQESLQDEGA…NENMRQGRDK (80 aa). Basic and acidic residues predominate over residues 507–528; that stretch reads GIRDDRNEEKRITEAEKNERVQ. The segment covering 530–539 has biased composition (polar residues); sequence QLLTLSSELS. Serine 535 is modified (phosphoserine). Over residues 540 to 564 the composition is skewed to basic and acidic residues; it reads QARDENKRTHNDIIHNENMRQGRDK. Threonine 567 carries the post-translational modification Phosphothreonine; by ROCK2 and PKC/PRKCI.

In terms of assembly, monomer. Homodimer. Interacts with PALS1 and NHERF2. Found in a complex with EZR, PODXL and NHERF2. Interacts with MCC, PLEKHG6, PODXL, SCYL3/PACE1, NHERF1 and TMEM8B. Interacts (when phosphorylated) with FES/FPS. Interacts with dimeric S100P, the interaction may be activating through unmasking of F-actin binding sites. Identified in complexes that contain VIM, EZR, AHNAK, BFSP1, BFSP2, ANK2, PLEC, PRX and spectrin. Detected in a complex composed of at least EZR, AHNAK, PPL and PRX. Interacts with PDPN (via cytoplasmic domain); activates RHOA and promotes epithelial-mesenchymal transition. Interacts with SPN/CD43 cytoplasmic tail, CD44 and ICAM2. Interacts with SLC9A3; interaction targets SLC9A3 to the apical membrane. Interacts with SLC9A1; regulates interactions of SLC9A1 with cytoskeletal and promotes stress fiber formation. Interacts with CLIC5; may work together in a complex which also includes RDX and MYO6 to stabilize linkages between the plasma membrane and subjacent actin cytoskeleton at the base of stereocilia. Phosphorylated by tyrosine-protein kinases. Phosphorylation by ROCK2 suppresses the head-to-tail association of the N-terminal and C-terminal halves resulting in an opened conformation which is capable of actin and membrane-binding. Post-translationally, S-nitrosylation is induced by interferon-gamma and oxidatively-modified low-densitity lipoprotein (LDL(ox)) possibly implicating the iNOS-S100A8/9 transnitrosylase complex. In terms of tissue distribution, expressed in cerebral cortex, basal ganglia, hippocampus, hypophysis, and optic nerve. Weakly expressed in brain stem and diencephalon. Stronger expression was detected in gray matter of frontal lobe compared to white matter (at protein level). Component of the microvilli of intestinal epithelial cells. Preferentially expressed in astrocytes of hippocampus, frontal cortex, thalamus, parahippocampal cortex, amygdala, insula, and corpus callosum. Not detected in neurons in most tissues studied.

It is found in the apical cell membrane. It localises to the cell projection. Its subcellular location is the microvillus membrane. The protein localises to the ruffle membrane. The protein resides in the cytoplasm. It is found in the cell cortex. It localises to the cytoskeleton. Its subcellular location is the microvillus. Its activity is regulated as follows. A head-to-tail association, of the N-terminal and C-terminal halves results in a closed conformation (inactive form) which is incapable of actin or membrane-binding. Its function is as follows. Probably involved in connections of major cytoskeletal structures to the plasma membrane. In epithelial cells, required for the formation of microvilli and membrane ruffles on the apical pole. Along with PLEKHG6, required for normal macropinocytosis. The sequence is that of Ezrin (EZR) from Homo sapiens (Human).